The following is a 73-amino-acid chain: Metallothionein-like protein type 2 (73 aa).

It belongs to the metallothionein superfamily. Type 15 family.

Functionally, metallothioneins have a high content of cysteine residues that bind various heavy metals. The chain is Metallothionein-like protein type 2 from Solanum lycopersicum (Tomato).